The sequence spans 105 residues: Phosphoribosyl-ATP pyrophosphatase (105 aa).

It belongs to the PRA-PH family.

The protein resides in the cytoplasm. The enzyme catalyses 1-(5-phospho-beta-D-ribosyl)-ATP + H2O = 1-(5-phospho-beta-D-ribosyl)-5'-AMP + diphosphate + H(+). The protein operates within amino-acid biosynthesis; L-histidine biosynthesis; L-histidine from 5-phospho-alpha-D-ribose 1-diphosphate: step 2/9. This Ruegeria sp. (strain TM1040) (Silicibacter sp.) protein is Phosphoribosyl-ATP pyrophosphatase.